The chain runs to 595 residues: MDEETAYELERQKTIAENRALLDSLGLDPAGASSPFGSSPAPTSNKTKPKPKPAPKKRKAAAVIAVDEGPRRRSGRIAGLEADGDAFKAKVEEEEKEREILRVVSRKEREKVMDVGKMVEDTPEDEIKDMEKYLQSIAELSNPRTYPAGTVSAREAYADSDTVPSEVQRLKDAFKDMSLKGNTKVTNERVFSMCVHPEKTKTLVLVGDKYGQLGIWDALGPPMEKPENEDDTSGLLRAEGEDEYQEGRVWRVQAHAKNSISCMKVDPVNGSGLFSTAYDCSLRHLSFSTLQSTELFSFQDEDLLINHFDLLPSAQEAWMVDKNGGISHWDTRESKRESGRRRWVVQEEGRGAKLGGVSVNPLMPHLICTAGNDQHVRIWDTRHLFSISSNLVPSAAAIEEEEEGTSTLSGQSSSLPHDTHPTRESDYSTVTSYLASPRGKGLMRAKWQHGKSCSSAYWDPWGRRILTTSYDDHLRVFNIDPGSSLVDDRAVGSLLQPNGFKPTKVVRHNCQTGRWLTILRAQWSLNMEYMPHFTVGNMKRTLDVVSATGEKIVGLWTDDVTAVPTVTASHPNIVDRVVGGNTSGRIQLWSSGDHI.

A disordered region spans residues 20-79 (ALLDSLGLDPAGASSPFGSSPAPTSNKTKPKPKPAPKKRKAAAVIAVDEGPRRRSGRIAG). Residues 29–46 (PAGASSPFGSSPAPTSNK) show a composition bias toward low complexity. The span at 47–60 (TKPKPKPAPKKRKA) shows a compositional bias: basic residues. WD repeat units follow at residues 185–226 (VTNE…MEKP), 255–297 (HAKN…ELFS), 300–339 (DEDL…RESG), and 349–389 (GRGA…SISS). Residues 397–429 (AIEEEEEGTSTLSGQSSSLPHDTHPTRESDYST) form a disordered region. Low complexity predominate over residues 405 to 415 (TSTLSGQSSSL). Residues 417–426 (HDTHPTRESD) are compositionally biased toward basic and acidic residues. WD repeat units follow at residues 448–487 (QHGK…SLVD), 519–556 (LRAQ…VGLW), and 558–595 (DDVT…GDHI).

This sequence belongs to the WD repeat DDB2/WDR76 family.

Its function is as follows. DNA-binding protein that binds to both single- and double-stranded DNA. Binds preferentially to UV-damaged DNA. May be involved in DNA-metabolic processes. This chain is DNA damage-binding protein CMR1, found in Cryptococcus neoformans var. neoformans serotype D (strain B-3501A) (Filobasidiella neoformans).